We begin with the raw amino-acid sequence, 229 residues long: Large ribosomal subunit protein uL1 (229 aa).

The protein belongs to the universal ribosomal protein uL1 family. Part of the 50S ribosomal subunit.

Functionally, binds directly to 23S rRNA. The L1 stalk is quite mobile in the ribosome, and is involved in E site tRNA release. Protein L1 is also a translational repressor protein, it controls the translation of the L11 operon by binding to its mRNA. This Streptococcus pneumoniae (strain JJA) protein is Large ribosomal subunit protein uL1.